Reading from the N-terminus, the 164-residue chain is V-type proton ATPase 16 kDa proteolipid subunit (164 aa).

At 1-9 (MASFSGDET) the chain is on the lumenal side. Residues 10 to 32 (APFFGFLGAAAALVFSCMGAAYG) form a helical membrane-spanning segment. The Cytoplasmic segment spans residues 33 to 54 (TAKSGVGVASMGVMRPELVMKS). Residues 55–75 (IVPVVMAGVLGIYGLIIAVII) form a helical membrane-spanning segment. At 76–94 (STGINPKAKSYYLFDGYAH) the chain is on the lumenal side. The chain crosses the membrane as a helical span at residues 95–116 (LSSGLACGLAGLSAGMAIGIVG). Residues 117 to 128 (DAGVRANAQQPK) lie on the Cytoplasmic side of the membrane. Residues 129–154 (LFVGMILILIFAEALALYGLIVGIIL) form a helical membrane-spanning segment. Residues 155 to 164 (SSRAGQSRAD) are Lumenal-facing.

It belongs to the V-ATPase proteolipid subunit family. In terms of assembly, V-ATPase is a heteromultimeric enzyme composed of a peripheral catalytic V1 complex (main components: subunits A, B, C, D, E, and F) attached to an integral membrane V0 proton pore complex (main component: the proteolipid protein; which is present as a hexamer that forms the proton-conducting pore).

It is found in the vacuole membrane. In terms of biological role, proton-conducting pore forming subunit of the membrane integral V0 complex of vacuolar ATPase. V-ATPase is responsible for acidifying a variety of intracellular compartments in eukaryotic cells. In Vigna radiata var. radiata (Mung bean), this protein is V-type proton ATPase 16 kDa proteolipid subunit.